The primary structure comprises 180 residues: NAD(P)H-quinone oxidoreductase subunit I, chloroplastic (180 aa).

2 consecutive 4Fe-4S ferredoxin-type domains span residues 55–84 (GRIH…VDWK) and 95–124 (LNYS…MTEE). [4Fe-4S] cluster-binding residues include C64, C67, C70, C74, C104, C107, C110, and C114.

This sequence belongs to the complex I 23 kDa subunit family. In terms of assembly, NDH is composed of at least 16 different subunits, 5 of which are encoded in the nucleus. It depends on [4Fe-4S] cluster as a cofactor.

The protein resides in the plastid. It is found in the chloroplast thylakoid membrane. It carries out the reaction a plastoquinone + NADH + (n+1) H(+)(in) = a plastoquinol + NAD(+) + n H(+)(out). The catalysed reaction is a plastoquinone + NADPH + (n+1) H(+)(in) = a plastoquinol + NADP(+) + n H(+)(out). NDH shuttles electrons from NAD(P)H:plastoquinone, via FMN and iron-sulfur (Fe-S) centers, to quinones in the photosynthetic chain and possibly in a chloroplast respiratory chain. The immediate electron acceptor for the enzyme in this species is believed to be plastoquinone. Couples the redox reaction to proton translocation, and thus conserves the redox energy in a proton gradient. This is NAD(P)H-quinone oxidoreductase subunit I, chloroplastic from Nandina domestica (Heavenly bamboo).